Consider the following 207-residue polypeptide: MFSRVFVRAASNAAKAGVKPPVKLFGVEGTYASALFTAASKETSVESASSSLVKLSSLIKEDAKLKHIMENPALSTKDRAVVVDSLVKSSANLDKPVVNLLKVLAENNKLGLFDKISSQFSILNDAHNGLIRGSVTTAQPLDSKNFKRLEKALQQSSLVGQQKTLKLDNVVKPDIKGGLIVEVGDQTIDLSVSSKIQKLNKVLEETI.

It belongs to the ATPase delta chain family. In terms of assembly, F-type ATPases have 2 components, CF(1) - the catalytic core - and CF(0) - the membrane proton channel. CF(1) has five subunits: alpha(3), beta(3), gamma(1), delta(1), epsilon(1). CF(0) has three main subunits: a, b and c.

It is found in the mitochondrion. The protein localises to the mitochondrion inner membrane. Its function is as follows. Mitochondrial membrane ATP synthase (F(1)F(0) ATP synthase or Complex V) produces ATP from ADP in the presence of a proton gradient across the membrane which is generated by electron transport complexes of the respiratory chain. F-type ATPases consist of two structural domains, F(1) - containing the extramembraneous catalytic core and F(0) - containing the membrane proton channel, linked together by a central stalk and a peripheral stalk. During catalysis, ATP synthesis in the catalytic domain of F(1) is coupled via a rotary mechanism of the central stalk subunits to proton translocation. Part of the complex F(0) domain and the peripheric stalk, which acts as a stator to hold the catalytic alpha(3)beta(3) subcomplex and subunit a/ATP6 static relative to the rotary elements. This Candida glabrata (strain ATCC 2001 / BCRC 20586 / JCM 3761 / NBRC 0622 / NRRL Y-65 / CBS 138) (Yeast) protein is ATP synthase subunit 5, mitochondrial (ATP5).